The primary structure comprises 248 residues: 3-deoxy-manno-octulosonate cytidylyltransferase (248 aa).

Belongs to the KdsB family.

The protein resides in the cytoplasm. It carries out the reaction 3-deoxy-alpha-D-manno-oct-2-ulosonate + CTP = CMP-3-deoxy-beta-D-manno-octulosonate + diphosphate. Its pathway is nucleotide-sugar biosynthesis; CMP-3-deoxy-D-manno-octulosonate biosynthesis; CMP-3-deoxy-D-manno-octulosonate from 3-deoxy-D-manno-octulosonate and CTP: step 1/1. It functions in the pathway bacterial outer membrane biogenesis; lipopolysaccharide biosynthesis. Activates KDO (a required 8-carbon sugar) for incorporation into bacterial lipopolysaccharide in Gram-negative bacteria. This Syntrophus aciditrophicus (strain SB) protein is 3-deoxy-manno-octulosonate cytidylyltransferase.